Consider the following 97-residue polypeptide: UPF0390 protein CNBD1430 (97 aa).

2 disordered regions span residues 1-57 and 75-97; these read MAQG…INNS and RNVGELESGEGKDGKAKGKGKSR. A compositionally biased stretch (basic and acidic residues) spans 29–46; sequence GKREVAPKDRQRVLERSQ. Residues 48–57 show a composition bias toward polar residues; it reads KQLSSKINNS.

This sequence belongs to the UPF0390 family.

The chain is UPF0390 protein CNBD1430 from Cryptococcus neoformans var. neoformans serotype D (strain B-3501A) (Filobasidiella neoformans).